The primary structure comprises 521 residues: SET and MYND domain-containing protein DDB_G0292140 (521 aa).

The tract at residues 1 to 101 (MDGVIESPSN…KIKKSKKSIK (101 aa)) is disordered. Residues 12–55 (TIKISPSTSDSSTTTPIITTPPTQSTATVTTKAAATTTTTEAST) show a composition bias toward low complexity. A compositionally biased stretch (pro residues) spans 56–65 (TPPPPQPTPT). Over residues 66–90 (PTQSTATVTKEVETTTETIPPIVTK) the composition is skewed to low complexity. Basic residues predominate over residues 91 to 101 (GKIKKSKKSIK). The region spanning 122-406 (WPIHVYSHPI…EGDELTISYI (285 aa)) is the SET domain. Cys-167, Cys-170, Cys-188, Cys-191, Cys-197, Cys-201, His-209, and Cys-213 together coordinate Zn(2+). The MYND-type zinc-finger motif lies at 167–213 (CQHCFLEVPLNQQILPTDFYMCEGCQRVGYCSANCRCIDYSQHRFEC). The interval 442 to 521 (QTGTLEKDDD…QDHQNNDKSN (80 aa)) is disordered. The segment covering 448–469 (KDDDDNDDEKEKMDEDDDEKDD) has biased composition (acidic residues). A compositionally biased stretch (basic and acidic residues) spans 470–485 (DINNKNDKKSKYKSDG). Over residues 486–495 (STDDEEDEDN) the composition is skewed to acidic residues. A compositionally biased stretch (low complexity) spans 497 to 514 (NNKNNNKNKNNNSNNQDH).

Belongs to the class V-like SAM-binding methyltransferase superfamily.

In terms of biological role, probable methyltransferase. This is SET and MYND domain-containing protein DDB_G0292140 from Dictyostelium discoideum (Social amoeba).